An 830-amino-acid polypeptide reads, in one-letter code: uncharacterized protein (830 aa).

Residues Met-1–Val-12 are compositionally biased toward basic and acidic residues. The tract at residues Met-1–Thr-61 is disordered. The span at Ala-15 to Val-25 shows a compositional bias: polar residues. Residues Thr-249–Asn-433 enclose the Helicase ATP-binding domain. Asp-262–Thr-269 serves as a coordination point for ATP. A DEAH box motif is present at residues Asp-384–His-387. The 155-residue stretch at Glu-662–Thr-816 folds into the Helicase C-terminal domain. Ser-712 bears the Phosphoserine mark.

Belongs to the SNF2/RAD54 helicase family.

It localises to the nucleus. This is an uncharacterized protein from Schizosaccharomyces pombe (strain 972 / ATCC 24843) (Fission yeast).